A 237-amino-acid chain; its full sequence is Small ribosomal subunit protein uS2m (237 aa).

This sequence belongs to the universal ribosomal protein uS2 family.

Its subcellular location is the mitochondrion. This is Small ribosomal subunit protein uS2m (RPS2) from Marchantia polymorpha (Common liverwort).